A 92-amino-acid polypeptide reads, in one-letter code: Ezrin (92 aa).

An FERM domain is found at Gln1 to Arg72. At Lys15 the chain carries N6-acetyllysine. The interval Glu42–Lys92 is interaction with SCYL3.

In terms of assembly, interacts with PALS1 and NHERF2. Found in a complex with EZR, PODXL and NHERF2. Interacts with MCC, PLEKHG6, PODXL, SCYL3/PACE1, NHERF1 and TMEM8B. Interacts (when phosphorylated) with FES/FPS. Interacts with dimeric S100P, the interaction may be activating through unmasking of F-actin binding sites. Identified in complexes that contain VIM, EZR, AHNAK, BFSP1, BFSP2, ANK2, PLEC, PRX and spectrin. Detected in a complex composed of at least EZR, AHNAK, PPL and PRX. Interacts with PDPN (via cytoplasmic domain); activates RHOA and promotes epithelial-mesenchymal transition. Interacts with SPN/CD43 cytoplasmic tail, CD44 and ICAM2. Interacts with CLIC5; may work together in a complex which also includes RDX and MYO6 to stabilize linkages between the plasma membrane and subjacent actin cytoskeleton at the base of stereocilia. Phosphorylated by tyrosine-protein kinases. Phosphorylation by ROCK2 suppresses the head-to-tail association of the N-terminal and C-terminal halves resulting in an opened conformation which is capable of actin and membrane-binding. In terms of processing, S-nitrosylation is induced by interferon-gamma and oxidatively-modified low-densitity lipoprotein (LDL(ox)) possibly implicating the iNOS-S100A8/9 transnitrosylase complex.

It localises to the apical cell membrane. Its subcellular location is the cell projection. The protein localises to the microvillus membrane. The protein resides in the ruffle membrane. It is found in the cytoplasm. It localises to the cell cortex. Its subcellular location is the cytoskeleton. The protein localises to the microvillus. Its activity is regulated as follows. A head-to-tail association, of the N-terminal and C-terminal halves results in a closed conformation (inactive form) which is incapable of actin or membrane-binding. Its function is as follows. Probably involved in connections of major cytoskeletal structures to the plasma membrane. In epithelial cells, required for the formation of microvilli and membrane ruffles on the apical pole. Along with PLEKHG6, required for normal macropinocytosis. The protein is Ezrin of Mesocricetus auratus (Golden hamster).